A 274-amino-acid chain; its full sequence is Undecaprenyl-diphosphatase 2 (274 aa).

6 helical membrane-spanning segments follow: residues 47–64 (VFVI…CWEY), 82–102 (WKFV…GLTF), 110–130 (LFSP…ILWA), 185–205 (ATEF…LYDL), 219–239 (LMAV…RGLI), and 249–269 (VFAW…WSGL).

Belongs to the UppP family.

The protein localises to the cell inner membrane. It carries out the reaction di-trans,octa-cis-undecaprenyl diphosphate + H2O = di-trans,octa-cis-undecaprenyl phosphate + phosphate + H(+). Its function is as follows. Catalyzes the dephosphorylation of undecaprenyl diphosphate (UPP). Confers resistance to bacitracin. The sequence is that of Undecaprenyl-diphosphatase 2 from Rhodospirillum rubrum (strain ATCC 11170 / ATH 1.1.1 / DSM 467 / LMG 4362 / NCIMB 8255 / S1).